The chain runs to 228 residues: Cytochrome c oxidase subunit 2 (228 aa).

The Mitochondrial intermembrane segment spans residues 1–26; the sequence is MTTWANMNLQDSASPIMEQLIYFHDH. A helical transmembrane segment spans residues 27–48; it reads ALMIIIMILMVVSYMMIAMVFN. Residues 49–62 lie on the Mitochondrial matrix side of the membrane; sequence KYINRFLLEGQMIE. The helical transmembrane segment at 63–82 threads the bilayer; the sequence is LAWTIAPAVILIFIAVPSLR. Over 83 to 228 the chain is Mitochondrial intermembrane; sequence LLYLMDEINT…FINWILKMNM (146 aa). Histidine 161, cysteine 196, glutamate 198, cysteine 200, histidine 204, and methionine 207 together coordinate Cu cation. Glutamate 198 contacts Mg(2+).

It belongs to the cytochrome c oxidase subunit 2 family. As to quaternary structure, component of the cytochrome c oxidase (complex IV, CIV), a multisubunit enzyme composed of a catalytic core of 3 subunits and several supernumerary subunits. The complex exists as a monomer or a dimer and forms supercomplexes (SCs) in the inner mitochondrial membrane with ubiquinol-cytochrome c oxidoreductase (cytochrome b-c1 complex, complex III, CIII). Cu cation serves as cofactor.

It localises to the mitochondrion inner membrane. It catalyses the reaction 4 Fe(II)-[cytochrome c] + O2 + 8 H(+)(in) = 4 Fe(III)-[cytochrome c] + 2 H2O + 4 H(+)(out). Component of the cytochrome c oxidase, the last enzyme in the mitochondrial electron transport chain which drives oxidative phosphorylation. The respiratory chain contains 3 multisubunit complexes succinate dehydrogenase (complex II, CII), ubiquinol-cytochrome c oxidoreductase (cytochrome b-c1 complex, complex III, CIII) and cytochrome c oxidase (complex IV, CIV), that cooperate to transfer electrons derived from NADH and succinate to molecular oxygen, creating an electrochemical gradient over the inner membrane that drives transmembrane transport and the ATP synthase. Cytochrome c oxidase is the component of the respiratory chain that catalyzes the reduction of oxygen to water. Electrons originating from reduced cytochrome c in the intermembrane space (IMS) are transferred via the dinuclear copper A center (CU(A)) of subunit 2 and heme A of subunit 1 to the active site in subunit 1, a binuclear center (BNC) formed by heme A3 and copper B (CU(B)). The BNC reduces molecular oxygen to 2 water molecules using 4 electrons from cytochrome c in the IMS and 4 protons from the mitochondrial matrix. The sequence is that of Cytochrome c oxidase subunit 2 (COII) from Periplaneta americana (American cockroach).